Reading from the N-terminus, the 534-residue chain is Phosphoenolpyruvate carboxykinase (ATP) (534 aa).

Residues Arg58, Tyr194, and Lys200 each coordinate substrate. Residues Lys200, His219, and 235 to 243 (GLSGTGKTT) contribute to the ATP site. Lys200 and His219 together coordinate Mn(2+). A Mn(2+)-binding site is contributed by Asp256. Glu284, Arg322, and Thr449 together coordinate ATP. Arg322 contributes to the substrate binding site.

It belongs to the phosphoenolpyruvate carboxykinase (ATP) family. Mn(2+) serves as cofactor.

It is found in the cytoplasm. The enzyme catalyses oxaloacetate + ATP = phosphoenolpyruvate + ADP + CO2. Its pathway is carbohydrate biosynthesis; gluconeogenesis. Functionally, involved in the gluconeogenesis. Catalyzes the conversion of oxaloacetate (OAA) to phosphoenolpyruvate (PEP) through direct phosphoryl transfer between the nucleoside triphosphate and OAA. This Novosphingobium aromaticivorans (strain ATCC 700278 / DSM 12444 / CCUG 56034 / CIP 105152 / NBRC 16084 / F199) protein is Phosphoenolpyruvate carboxykinase (ATP).